We begin with the raw amino-acid sequence, 288 residues long: Acetyl-coenzyme A carboxylase carboxyl transferase subunit beta (288 aa).

In terms of domain architecture, CoA carboxyltransferase N-terminal spans Leu34–Gln288. The Zn(2+) site is built by Cys38, Cys41, Cys56, and Cys59. Residues Cys38 to Cys59 form a C4-type zinc finger.

This sequence belongs to the AccD/PCCB family. As to quaternary structure, acetyl-CoA carboxylase is a heterohexamer composed of biotin carboxyl carrier protein (AccB), biotin carboxylase (AccC) and two subunits each of ACCase subunit alpha (AccA) and ACCase subunit beta (AccD). Zn(2+) serves as cofactor.

The protein localises to the cytoplasm. The enzyme catalyses N(6)-carboxybiotinyl-L-lysyl-[protein] + acetyl-CoA = N(6)-biotinyl-L-lysyl-[protein] + malonyl-CoA. Its pathway is lipid metabolism; malonyl-CoA biosynthesis; malonyl-CoA from acetyl-CoA: step 1/1. Its function is as follows. Component of the acetyl coenzyme A carboxylase (ACC) complex. Biotin carboxylase (BC) catalyzes the carboxylation of biotin on its carrier protein (BCCP) and then the CO(2) group is transferred by the transcarboxylase to acetyl-CoA to form malonyl-CoA. This is Acetyl-coenzyme A carboxylase carboxyl transferase subunit beta from Streptococcus pyogenes serotype M1.